The sequence spans 339 residues: D-erythrose-4-phosphate dehydrogenase (339 aa).

11-12 (RI) serves as a coordination point for NAD(+). Substrate is bound by residues 158-160 (SCT), Arg-204, 217-218 (TK), and Arg-240. The active-site Nucleophile is Cys-159. Asn-322 is an NAD(+) binding site.

Belongs to the glyceraldehyde-3-phosphate dehydrogenase family. Epd subfamily. Homotetramer.

It is found in the cytoplasm. The enzyme catalyses D-erythrose 4-phosphate + NAD(+) + H2O = 4-phospho-D-erythronate + NADH + 2 H(+). It functions in the pathway cofactor biosynthesis; pyridoxine 5'-phosphate biosynthesis; pyridoxine 5'-phosphate from D-erythrose 4-phosphate: step 1/5. In terms of biological role, catalyzes the NAD-dependent conversion of D-erythrose 4-phosphate to 4-phosphoerythronate. The protein is D-erythrose-4-phosphate dehydrogenase of Aliivibrio fischeri (strain ATCC 700601 / ES114) (Vibrio fischeri).